The following is a 124-amino-acid chain: Small ribosomal subunit protein uS12 (124 aa).

The residue at position 89 (aspartate 89) is a 3-methylthioaspartic acid.

This sequence belongs to the universal ribosomal protein uS12 family. In terms of assembly, part of the 30S ribosomal subunit. Contacts proteins S8 and S17. May interact with IF1 in the 30S initiation complex.

Its function is as follows. With S4 and S5 plays an important role in translational accuracy. Interacts with and stabilizes bases of the 16S rRNA that are involved in tRNA selection in the A site and with the mRNA backbone. Located at the interface of the 30S and 50S subunits, it traverses the body of the 30S subunit contacting proteins on the other side and probably holding the rRNA structure together. The combined cluster of proteins S8, S12 and S17 appears to hold together the shoulder and platform of the 30S subunit. This Edwardsiella ictaluri (strain 93-146) protein is Small ribosomal subunit protein uS12.